The sequence spans 550 residues: Keratin, type II cytoskeletal 74 (550 aa).

The segment at 1–140 (MSRQLNIKSG…DPEIQKVRAQ (140 aa)) is head. A coil 1A region spans residues 141-176 (EREQIMALNNKFASFIDKVRFLEQQNQVLGTKWELL). The IF rod domain maps to 141-468 (EREQIMALNN…KLLEGEECWM (328 aa)). Positions 177–195 (QQMDLNNCRKNLEPILEGY) are linker 1. Positions 196–287 (IGNLRKQLEM…CLYDAEVAQI (92 aa)) are coil 1B. The linker 12 stretch occupies residues 288–311 (QTHTSETSVILSMDNNRYLDLDSI). The coil 2 stretch occupies residues 312–464 (IAEVRAQYED…ATYSKLLEGE (153 aa)). The tail stretch occupies residues 465–550 (ECWMSGENPS…VSSRARKAAR (86 aa)). Positions 491 to 550 (HPGSSASTDLGASTMASTGTSSSSSTQSGQTRAKGARVGDPKDSQDKSTPVSSRARKAAR) are disordered. A compositionally biased stretch (low complexity) spans 502 to 521 (ASTMASTGTSSSSSTQSGQT). Positions 527 to 536 (RVGDPKDSQD) are enriched in basic and acidic residues.

This sequence belongs to the intermediate filament family. As to quaternary structure, heterotetramer of two type I and two type II keratins.

Its function is as follows. Has a role in hair formation. Specific component of keratin intermediate filaments in the inner root sheath (IRS) of the hair follicle. This is Keratin, type II cytoskeletal 74 (KRT74) from Bos taurus (Bovine).